Here is an 872-residue protein sequence, read N- to C-terminus: Alanine--tRNA ligase (872 aa).

4 residues coordinate Zn(2+): His-567, His-571, Cys-669, and His-673.

Belongs to the class-II aminoacyl-tRNA synthetase family. Zn(2+) is required as a cofactor.

Its subcellular location is the cytoplasm. The catalysed reaction is tRNA(Ala) + L-alanine + ATP = L-alanyl-tRNA(Ala) + AMP + diphosphate. Its function is as follows. Catalyzes the attachment of alanine to tRNA(Ala) in a two-step reaction: alanine is first activated by ATP to form Ala-AMP and then transferred to the acceptor end of tRNA(Ala). Also edits incorrectly charged Ser-tRNA(Ala) and Gly-tRNA(Ala) via its editing domain. This is Alanine--tRNA ligase from Streptococcus pneumoniae (strain CGSP14).